Consider the following 850-residue polypeptide: MPAGLTEPAGAAAPVVSSASGAVTMAPVAALPVRVEGTPVALGPVTKAPVSVCVESVAPQPLPAPVGTLVTKVVPVTALPKLGSPRLPAPQIVTVKTPGTTTIQLPANLQLPPGTVLIKSNSGQLMLVSPQQAVTGAKTTSNITPRPAVPANTQTVKICTVPNSSSQLMKKVTVAPVKNLTQIGTTVATTASSTSSGQPVALPSSVITVTPAKLVNTVSTLKSSSLGVLSTPSNDARLKAETSVAAQTALPPTVLENVKKCKNFLSMLIKLACSGSQSPEMGQNVKRLVEQLLDAEIEAEEFTRKLYIELKSAPQPHLVPFLKKSVVALRQLLPNSQSFIENCVKEVSGDVVISSCTMTTATSPVVTSTVSPVLVSGATAPRTLSVQQTLNPLAGPGVANTGVVTLHSVAPAAATGGTTAATVLLQTSKPLTTSVPNTVAAVSLQPENPVVSGAAVTLAIPSATFGEASATPLCLPSAKPAITSAGTKADKPAIGTPVQIVTQPSTLLPQAAGIPQTAKVKQLVVQQPSGSSVNHVTSISHSSPLSTQNCGQKTPVNAVMPTSSIIKQITLPGNKLLSLQAQRSSIQSNKIKENGPTCFRGEDDINDVTFMAEVNLDEENACILAAHSDFVGTLIQSCKEEPFLVIGALQKRILDIGKKHDITELNSDAVNLISHATQERLRGLLEKLTTIAQHRMTIYKGSENYILSTDTRSQLKFLEKLDQLEKQRKDLEEREMLLKAAKSRSNKEDPEQLRLKQKAKELQQLELAQIQYRDANLTALAAIGPRKKRPLESGNESFKDNPSTSGTSSLTATKPFRPRITRICLRDLIFCMEQEREMKYSRALYLALLK.

The interval 99–240 (GTTTIQLPAN…TPSNDARLKA (142 aa)) is sufficient for interaction with ZNF628. In terms of domain architecture, TAFH spans 256–353 (ENVKKCKNFL…VKEVSGDVVI (98 aa)). Positions 504 to 526 (PSTLLPQAAGIPQTAKVKQLVVQ) are required for interaction with P65/RELA. The short motif at 509–549 (PQAAGIPQTAKVKQLVVQQPSGSSVNHVTSISHSSPLSTQN) is the Nuclear export signal element. Residue S584 is modified to Phosphoserine. Residues 642-691 (PFLVIGALQKRILDIGKKHDITELNSDAVNLISHATQERLRGLLEKLTTI) form the Histone-fold domain. Residues 788–812 (KRPLESGNESFKDNPSTSGTSSLTA) are disordered. Residues 794 to 812 (GNESFKDNPSTSGTSSLTA) are compositionally biased toward polar residues. Positions 818-850 (PRITRICLRDLIFCMEQEREMKYSRALYLALLK) are required for interaction with TAF12.

This sequence belongs to the TAF4 family. TFIID is composed of TATA binding protein (TBP) and a number of TBP-associated factors (TAFs). Heterodimerizes with TAF12/TFII20 via the C-terminal H2A-like histone-fold domain. This heterodimer forms a histone-like octamer with the TAF6/TAFII70-TAF9/TAFII31 heterodimer. Interacts with P65/RELA homodimers and P65/RELA-REL heterodimers. Interaction with POU2AF1, via its C-terminal activation domain, is required for octamer-dependent transcription. Interacts with ZNF628. As to expression, highly expressed in the testes and ovary, whereas lower levels are detected in most other tissues.

The protein resides in the nucleus. Its subcellular location is the cytoplasm. Its function is as follows. Cell type-specific subunit of the general transcription factor TFIID that may function as a gene-selective coactivator in certain cells. TFIID is a multimeric protein complex that plays a central role in mediating promoter responses to various activators asond repressors. TAF4B is a transcriptional coactivator of the p65/RELA NF-kappa-B subunit. Involved in the activation of a subset of antiapoptotic genes including TNFAIP3. Through interaction with OCBA/POU2AF1, acts as a coactivator of B-cell-specific transcription. Plays a role in spermiogenesis and oogenesis. The polypeptide is Transcription initiation factor TFIID subunit 4B (Taf4b) (Mus musculus (Mouse)).